The following is a 311-amino-acid chain: Ribosomal RNA small subunit methyltransferase H (311 aa).

S-adenosyl-L-methionine is bound by residues 34–36 (GGH), Asp-54, Phe-78, Asp-100, and Gln-107.

The protein belongs to the methyltransferase superfamily. RsmH family.

The protein resides in the cytoplasm. It catalyses the reaction cytidine(1402) in 16S rRNA + S-adenosyl-L-methionine = N(4)-methylcytidine(1402) in 16S rRNA + S-adenosyl-L-homocysteine + H(+). Functionally, specifically methylates the N4 position of cytidine in position 1402 (C1402) of 16S rRNA. The chain is Ribosomal RNA small subunit methyltransferase H from Hamiltonella defensa subsp. Acyrthosiphon pisum (strain 5AT).